The chain runs to 152 residues: Small ribosomal subunit protein uS11 (152 aa).

Positions 133–152 (VTPIPTDSTRRKSGHRGRRL) are disordered. A compositionally biased stretch (basic residues) spans 143 to 152 (RKSGHRGRRL).

Belongs to the universal ribosomal protein uS11 family. As to quaternary structure, component of the small ribosomal subunit. Part of the small subunit (SSU) processome, composed of more than 70 proteins and the RNA chaperone small nucleolar RNA (snoRNA) U3.

The protein localises to the cytoplasm. Its subcellular location is the nucleus. The protein resides in the nucleolus. Its function is as follows. Component of the small ribosomal subunit. The ribosome is a large ribonucleoprotein complex responsible for the synthesis of proteins in the cell. Part of the small subunit (SSU) processome, first precursor of the small eukaryotic ribosomal subunit. During the assembly of the SSU processome in the nucleolus, many ribosome biogenesis factors, an RNA chaperone and ribosomal proteins associate with the nascent pre-rRNA and work in concert to generate RNA folding, modifications, rearrangements and cleavage as well as targeted degradation of pre-ribosomal RNA by the RNA exosome. The sequence is that of Small ribosomal subunit protein uS11 (rps14) from Dictyostelium discoideum (Social amoeba).